A 298-amino-acid chain; its full sequence is MSALYFQNLPSRPANKENYTRLLLKHINPNNKYAINPSLPLPHNKLQISSQPLMLLDDQMGLLEVSISRSSKMTNQAFLTFVTQEEADRFLEKYTTTALKVQGRKVRMGKARTNSLLGLSIEMQKKKGNDETYNLDIKKVLKARKLKRKLRSDDICAKKFRLKRQIRRLKHKLRSRKVEEAEIDRIVKEFETRRLENMKSQQENLKQSQKPLKRAKVSNTMENPPNKVLLIQNLPSGTTEQLLSQILGNEALVEIRLVSVRNLAFVEYETVADATKIKNQLGSTYKLQNNDVTIGFAK.

2 consecutive RRM domains span residues 2–113 (SALY…KART) and 227–298 (KVLL…GFAK).

This sequence belongs to the RRM U1 A/B'' family. In terms of assembly, component of the spliceosome where it is associated with snRNP U1.

The protein localises to the nucleus. In terms of biological role, involved in nuclear mRNA splicing. The principal role of the U1A is to help fold or maintain U1 RNA in an active configuration. It is the first snRNP to interact with pre-mRNA. This interaction is required for the subsequent binding of U2 snRNP and the U4/U6/U5 tri-snRNP. This Saccharomyces cerevisiae (strain ATCC 204508 / S288c) (Baker's yeast) protein is U1 small nuclear ribonucleoprotein A (MUD1).